A 186-amino-acid chain; its full sequence is UPF0398 protein LBUL_0921 (186 aa).

It belongs to the UPF0398 family.

This is UPF0398 protein LBUL_0921 from Lactobacillus delbrueckii subsp. bulgaricus (strain ATCC BAA-365 / Lb-18).